Consider the following 57-residue polypeptide: Large ribosomal subunit protein bL32 (57 aa).

Residues 1–21 (MAVQQRRSSKHRRDKRRSHDA) form a disordered region. Over residues 7-18 (RSSKHRRDKRRS) the composition is skewed to basic residues.

This sequence belongs to the bacterial ribosomal protein bL32 family.

In Mycoplasma pneumoniae (strain ATCC 29342 / M129 / Subtype 1) (Mycoplasmoides pneumoniae), this protein is Large ribosomal subunit protein bL32 (rpmF).